Consider the following 54-residue polypeptide: Large ribosomal subunit protein bL32 (54 aa).

The disordered stretch occupies residues 1 to 54; sequence MAVQQNRKTRSRRGMRRSHDALTAAQLSVDSTSGETHRRHHVTADGYYRGKKVI. A compositionally biased stretch (basic residues) spans 7 to 16; sequence RKTRSRRGMR. Residues 25–34 show a composition bias toward polar residues; it reads AQLSVDSTSG.

The protein belongs to the bacterial ribosomal protein bL32 family.

The polypeptide is Large ribosomal subunit protein bL32 (Tolumonas auensis (strain DSM 9187 / NBRC 110442 / TA 4)).